Here is a 1712-residue protein sequence, read N- to C-terminus: Collagen alpha-2(IV) chain (1712 aa).

Residues 1 to 25 form the signal peptide; sequence MGRDQRAVAGPALRRWLLLGTVTVG. The propeptide at 26–183 is N-terminal propeptide (7S domain); sequence FLAQSVLAGV…LPKEERDRYR (158 aa). 5 disordered regions span residues 60 to 237, 302 to 448, 507 to 640, 690 to 906, and 1157 to 1480; these read RGQP…GFYG, GLRG…PDGF, INGE…DAGL, GLPG…SPGF, and TGPP…GLPG. Positions 68–84 are enriched in low complexity; it reads PQGYNGPPGLQGFPGLQ. A compositionally biased stretch (gly residues) spans 121–130; sequence GHPGQGGPRG. N-linked (GlcNAc...) asparagine glycosylation occurs at asparagine 138. Residues 140 to 153 are compositionally biased toward low complexity; it reads TQGDSGPQGPPGSE. Positions 175-186 are enriched in basic and acidic residues; the sequence is PKEERDRYRGEP. A triple-helical region region spans residues 184 to 1484; sequence GEPGEPGLVG…SPGLPGMPGR (1301 aa). Pro residues-rich tracts occupy residues 215–224 and 433–445; these read RPGPPGPPGP and PPGP…PPGP. Composition is skewed to basic and acidic residues over residues 511-520 and 571-582; these read PGRKGDRGDP and KGDDGSPGRDGL. 2 stretches are compositionally biased toward low complexity: residues 628 to 640 and 698 to 710; these read LKGQ…DAGL and TGAK…PGFA. Over residues 711–720 the composition is skewed to gly residues; that stretch reads GADGGPGPRG. Residues 721 to 730 are compositionally biased toward low complexity; the sequence is LPGDAGREGF. Residues 752-766 show a composition bias toward pro residues; it reads DGSPGPIGLPGPDGP. Composition is skewed to low complexity over residues 769–778, 813–823, 831–844, 1302–1328, and 1400–1421; these read ERGLPGEVLG, MPGMPGLKGQP, QPGL…HGFP, GSAA…KGWA, and QPGT…EMGP. In terms of domain architecture, Collagen IV NC1 spans 1489-1712; it reads GYLLVKHSQT…SRCQVCMKNL (224 aa). Tyrosine 1490 is modified (3'-bromotyrosine). Disulfide bonds link cysteine 1504–cysteine 1593, cysteine 1537–cysteine 1590, cysteine 1549–cysteine 1555, cysteine 1612–cysteine 1708, cysteine 1646–cysteine 1705, and cysteine 1658–cysteine 1665.

The protein belongs to the type IV collagen family. In terms of assembly, there are six type IV collagen isoforms, alpha 1(IV)-alpha 6(IV), each of which can form a triple helix structure with 2 other chains to generate type IV collagen network. Interacts with EFEMP2. Post-translationally, prolines at the third position of the tripeptide repeating unit (G-X-Y) are hydroxylated in some or all of the chains. In terms of processing, type IV collagens contain numerous cysteine residues which are involved in inter- and intramolecular disulfide bonding. 12 of these, located in the NC1 domain, are conserved in all known type IV collagens. The trimeric structure of the NC1 domains is stabilized by covalent bonds between Lys and Met residues. Post-translationally, proteolytic processing produces the C-terminal NC1 peptide, canstatin.

The protein localises to the secreted. The protein resides in the extracellular space. It is found in the extracellular matrix. It localises to the basement membrane. Its function is as follows. Type IV collagen is the major structural component of glomerular basement membranes (GBM), forming a 'chicken-wire' meshwork together with laminins, proteoglycans and entactin/nidogen. In terms of biological role, canstatin, a cleavage product corresponding to the collagen alpha 2(IV) NC1 domain, possesses both anti-angiogenic and anti-tumor cell activity. It inhibits proliferation and migration of endothelial cells, reduces mitochondrial membrane potential, and induces apoptosis. Specifically induces Fas-dependent apoptosis and activates procaspase-8 and -9 activity. Ligand for alphavbeta3 and alphavbeta5 integrins. This is Collagen alpha-2(IV) chain from Homo sapiens (Human).